Here is a 380-residue protein sequence, read N- to C-terminus: L-lactate dehydrogenase (380 aa).

Positions 1 to 380 (MIISASTDYR…SADSLVQGLR (380 aa)) constitute an FMN hydroxy acid dehydrogenase domain. Residue Tyr-24 participates in substrate binding. Residues Ser-106 and Gln-127 each contribute to the FMN site. Substrate is bound at residue Tyr-129. Position 155 (Thr-155) interacts with FMN. A substrate-binding site is contributed by Arg-164. Lys-251 contacts FMN. The Proton acceptor role is filled by His-275. Residue Arg-278 participates in substrate binding. 306–330 (DSGIRSGLDVVRMIALGADGVLLGR) contacts FMN.

The protein belongs to the FMN-dependent alpha-hydroxy acid dehydrogenase family. FMN is required as a cofactor.

It localises to the cell inner membrane. The enzyme catalyses (S)-lactate + A = pyruvate + AH2. Its function is as follows. Catalyzes the conversion of L-lactate to pyruvate. Is coupled to the respiratory chain. This is L-lactate dehydrogenase from Serratia proteamaculans (strain 568).